The sequence spans 420 residues: Glucose-1-phosphate adenylyltransferase (420 aa).

Alpha-D-glucose 1-phosphate-binding positions include Y107, G172, E187–K188, and S205.

This sequence belongs to the bacterial/plant glucose-1-phosphate adenylyltransferase family. In terms of assembly, homotetramer.

The catalysed reaction is alpha-D-glucose 1-phosphate + ATP + H(+) = ADP-alpha-D-glucose + diphosphate. The protein operates within glycan biosynthesis; glycogen biosynthesis. Its function is as follows. Involved in the biosynthesis of ADP-glucose, a building block required for the elongation reactions to produce glycogen. Catalyzes the reaction between ATP and alpha-D-glucose 1-phosphate (G1P) to produce pyrophosphate and ADP-Glc. The polypeptide is Glucose-1-phosphate adenylyltransferase (Rhizobium leguminosarum bv. trifolii (strain WSM2304)).